We begin with the raw amino-acid sequence, 296 residues long: Alpha/beta-gliadin clone PW1215 (296 aa).

An N-terminal signal peptide occupies residues 1-20; it reads MKTFLILALLAIVATTATTA. Disordered stretches follow at residues 24-126 and 220-255; these read PVPQ…QAQQ and SSQV…VQPQ. Over residues 25–36 the composition is skewed to pro residues; it reads VPQPQPQNPSQP. Residues 37–58 are compositionally biased toward low complexity; the sequence is QPQGQVPLVQQQQFPGQQQQFP. Composition is skewed to pro residues over residues 59-71 and 81-116; these read PQQP…PFPS and FPQP…PQPQ. Low complexity-rich tracts occupy residues 117 to 126 and 220 to 241; these read QPISQQQAQQ and SSQV…FFQP. The segment covering 242–255 has biased composition (polar residues); it reads SQQNPQAQGSVQPQ.

The protein belongs to the gliadin/glutenin family. Post-translationally, substrate of transglutaminase.

In terms of biological role, gliadin is the major seed storage protein in wheat. In Triticum aestivum (Wheat), this protein is Alpha/beta-gliadin clone PW1215.